We begin with the raw amino-acid sequence, 1120 residues long: TBC1 domain family member 8B (1120 aa).

GRAM domains lie at 145-212 and 285-353; these read LKFE…EKTS and EQFN…DKTN. The 188-residue stretch at 487–674 folds into the Rab-GAP TBC domain; that stretch reads GIPETLRGEL…NVVDCFFYDG (188 aa). Residues 858–893 form the EF-hand domain; the sequence is NKDSLALWTFRLLDENSDCLINFKEFSSAIDIMYNG. The tract at residues 1035 to 1066 is disordered; the sequence is SPTSSAKGFSGTVCGSGGPSEEKTGSHLEKDP. Over residues 1054-1066 the composition is skewed to basic and acidic residues; the sequence is SEEKTGSHLEKDP.

As to quaternary structure, interacts (via domain Rab-GAP TBC) with RAB11B (in GTP-bound form). As to expression, kidney (at protein level).

It localises to the cytoplasm. The protein resides in the cytosol. Involved in vesicular recycling, probably as a RAB11B GTPase-activating protein. The chain is TBC1 domain family member 8B (TBC1D8B) from Homo sapiens (Human).